A 389-amino-acid chain; its full sequence is Large envelope protein (389 aa).

At Met1 the chain carries N-acetylmethionine. Gly2 carries N-myristoyl glycine; by host lipidation. The interval 2-108 (GQNLSTSNPL…PPLRNTHPQA (107 aa)) is pre-S1. Residues 2-163 (GQNLSTSNPL…FSRIGDPALN (162 aa)) form a pre-S region. The Virion surface; in external conformation segment spans residues 2–170 (GQNLSTSNPL…ALNMENITSG (169 aa)). Residues 2 to 242 (GQNLSTSNPL…PGYRWMCLRR (241 aa)) lie on the Intravirion; in internal conformation side of the membrane. Residues 77–101 (LPANPPPASTNRQTGRQPTPLSPPL) form a disordered region. A compositionally biased stretch (polar residues) spans 85-95 (STNRQTGRQPT). The segment at 109 to 163 (MQWNSTTFHQTLQDPRVRGLYFPAGGSSSGTVNPVPTTASPISSIFSRIGDPALN) is pre-S2. Residues 171 to 191 (LLGPLLVLQAGFFLLTRILTI) form a helical membrane-spanning segment. Residues 192–242 (PQSLDSWWTSLNFLGGTTVCLGQNSQSPTSNHSPTSCPPTCPGYRWMCLRR) are Intravirion; in external conformation-facing. The helical transmembrane segment at 243–263 (FIIFLFILLLCLIFLLVLLDY) threads the bilayer. The Virion surface segment spans residues 264–337 (QGMLPVCPLI…WASARFSWLS (74 aa)). Residue Asn309 is glycosylated (N-linked (GlcNAc...) asparagine; by host). The chain crosses the membrane as a helical span at residues 338 to 358 (LLVPFVQWFVGLSPTVWLSVI). The Intravirion segment spans residues 359-364 (WMMWYW). The chain crosses the membrane as a helical span at residues 365-387 (GPSLYRILSPFLPLLPIFFCLWV). At 388–389 (YI) the chain is on the virion surface side.

It belongs to the orthohepadnavirus major surface antigen family. In terms of assembly, in its internal form (Li-HBsAg), interacts with the capsid protein and with the isoform S. Interacts with host chaperone CANX. As to quaternary structure, associates with host chaperone CANX through its pre-S2 N glycan; this association may be essential for isoform M proper secretion. Interacts with isoform L. Interacts with the antigens of satellite virus HDV (HDVAgs); this interaction is required for encapsidation of HDV genomic RNA. Isoform M is N-terminally acetylated by host at a ratio of 90%, and N-glycosylated by host at the pre-S2 region. Post-translationally, myristoylated.

The protein localises to the virion membrane. The large envelope protein exists in two topological conformations, one which is termed 'external' or Le-HBsAg and the other 'internal' or Li-HBsAg. In its external conformation the protein attaches the virus to cell receptors and thereby initiating infection. This interaction determines the species specificity and liver tropism. This attachment induces virion internalization predominantly through caveolin-mediated endocytosis. The large envelope protein also assures fusion between virion membrane and endosomal membrane. In its internal conformation the protein plays a role in virion morphogenesis and mediates the contact with the nucleocapsid like a matrix protein. Its function is as follows. The middle envelope protein plays an important role in the budding of the virion. It is involved in the induction of budding in a nucleocapsid independent way. In this process the majority of envelope proteins bud to form subviral lipoprotein particles of 22 nm of diameter that do not contain a nucleocapsid. This Hepatitis B virus genotype D (isolate Germany/1-91/1991) (HBV-D) protein is Large envelope protein.